A 405-amino-acid polypeptide reads, in one-letter code: NADH-quinone oxidoreductase subunit D (405 aa).

This sequence belongs to the complex I 49 kDa subunit family. As to quaternary structure, NDH-1 is composed of 14 different subunits. Subunits NuoB, C, D, E, F, and G constitute the peripheral sector of the complex.

Its subcellular location is the cell inner membrane. The enzyme catalyses a quinone + NADH + 5 H(+)(in) = a quinol + NAD(+) + 4 H(+)(out). Functionally, NDH-1 shuttles electrons from NADH, via FMN and iron-sulfur (Fe-S) centers, to quinones in the respiratory chain. The immediate electron acceptor for the enzyme in this species is believed to be ubiquinone. Couples the redox reaction to proton translocation (for every two electrons transferred, four hydrogen ions are translocated across the cytoplasmic membrane), and thus conserves the redox energy in a proton gradient. In Sphingopyxis alaskensis (strain DSM 13593 / LMG 18877 / RB2256) (Sphingomonas alaskensis), this protein is NADH-quinone oxidoreductase subunit D.